A 997-amino-acid chain; its full sequence is uncharacterized protein (997 aa).

The protein belongs to the MG414/MG415 family.

This is an uncharacterized protein from Mycoplasma pneumoniae (strain ATCC 29342 / M129 / Subtype 1) (Mycoplasmoides pneumoniae).